The following is a 311-amino-acid chain: Long form salivary protein D7L1 (311 aa).

An N-terminal signal peptide occupies residues 1–21 (MIVTGVLLFILLELFAQGSQA). 4 disulfides stabilise this stretch: C37–C73, C69–C128, C178–C211, and C252–C263.

Belongs to the PBP/GOBP family.

It is found in the secreted. In terms of biological role, modulates blood feeding of female mosquitoes on vertebrate species by binding and sequestering different mediators involved in the host response. Binds leukotriene C4 and U-46619, a stable analog of thromboxane A2. Inhibits agonist-induced platelet aggregation. Exhibits vasodilating activity. The protein is Long form salivary protein D7L1 of Anopheles gambiae (African malaria mosquito).